We begin with the raw amino-acid sequence, 824 residues long: RelA-associated inhibitor (824 aa).

Met1 is subject to N-acetylmethionine. Disordered stretches follow at residues 48–87 and 99–271; these read SLWSDSPAPPGAQAGVPSRMARYSTSPVPEHFGSRGSPQK and RSES…YERL. A phosphoserine mark is found at Ser84, Ser100, Ser102, Ser110, Ser113, Ser119, and Ser120. The residue at position 123 (Thr123) is a Phosphothreonine. Ser134 bears the Phosphoserine mark. Arg137, Arg142, Arg144, Arg160, Arg167, and Arg180 each carry omega-N-methylarginine. Ser183, Ser187, and Ser203 each carry phosphoserine. An Omega-N-methylarginine modification is found at Arg205. Thr275 carries the phosphothreonine modification. Phosphoserine is present on Ser279. Disordered regions lie at residues 291-370 and 388-501; these read SLDG…RPIP and RAVL…QTVP. Thr307 bears the Phosphothreonine mark. A phosphoserine mark is found at Ser315, Ser331, and Ser338. A Phosphothreonine modification is found at Thr340. Residues 359 to 370 are compositionally biased toward low complexity; sequence QPRSTPRQRPIP. A compositionally biased stretch (pro residues) spans 400–424; sequence APPPKLPPQPPPQPQMQPQPQPQPQ. Residues 425 to 440 are compositionally biased toward low complexity; the sequence is MQPQSQAQPQTPAPQQ. Phosphoserine occurs at positions 522, 563, and 593. Residues 547-614 are disordered; the sequence is FHRHGGPGPG…SVLRKVGSPR (68 aa). The segment covering 575–597 has biased composition (pro residues); sequence PPAPAPPAPIPPPAPPQSSPPEQ. ANK repeat units lie at residues 655 to 684 and 688 to 717; these read EGITALHNAICGANYPIVDFLIAAGANVNS and HGWTPLHCAASCNDTAICTALVQHGAAIFA. Residues 754–816 form the SH3 domain; sequence MHNGVVYALW…PRNYFGLFPR (63 aa).

The protein belongs to the iASPP family. In terms of assembly, interacts with TP63 and TP73. Interacts with RELA NF-kappa-B subunit and with SP1 via its C-terminal part. Interacts (via SH3 domain and ANK repeats) with p53/TP53; the interaction inhibits pro-apoptotic activity of p53/TP53. Most abundant in skin with high levels also found in heart, testis and stomach. In 15.5 dpc embryonic heart, expressed at higher levels in atria than ventricles.

The protein resides in the cytoplasm. The protein localises to the nucleus. Its function is as follows. Regulator that plays a central role in regulation of apoptosis and transcription via its interaction with NF-kappa-B and p53/TP53 proteins. Inhibits p53/TP53 function, possibly by preventing the association between p53/TP53 and ASPP1 or ASPP2, and therefore suppressing the subsequent activation of apoptosis. Is involved in NF-kappa-B dependent negative regulation of inflammatory response. This Mus musculus (Mouse) protein is RelA-associated inhibitor.